The following is a 693-amino-acid chain: Adhesion G-protein coupled receptor G1 (693 aa).

Residues 1–25 (MTPQSLLQTTLFLLSLLFLVQGAHG) form the signal peptide. 26-33 (RGHREDFR) provides a ligand contact to heparin. At 26–401 (RGHREDFRFC…SVEVDAVHKH (376 aa)) the chain is on the extracellular side. Disulfide bonds link cysteine 35-cysteine 91 and cysteine 121-cysteine 177. Asparagine 39, asparagine 148, and asparagine 171 each carry an N-linked (GlcNAc...) asparagine glycan. 190-200 (LKHPQKASRRP) lines the heparin pocket. The GAIN-B domain occupies 224–395 (DMVSFEEDRI…AVLMVSSVEV (172 aa)). 4 N-linked (GlcNAc...) asparagine glycosylation sites follow: asparagine 234, asparagine 303, asparagine 324, and asparagine 341. Intrachain disulfides connect cysteine 346–cysteine 377 and cysteine 366–cysteine 379. The GPS stretch occupies residues 346–395 (CVFWVEDPTLSSPGHWSSAGCETVRRETQTSCFCNHLTYFAVLMVSSVEV). The stachel stretch occupies residues 384-397 (YFAVLMVSSVEVDA). A helical membrane pass occupies residues 402 to 424 (YLSLLSYVGCVVSALACLVTIAA). At 425–437 (YLCSRVPLPCRRK) the chain is on the cytoplasmic side. The chain crosses the membrane as a helical span at residues 438-460 (PRDYTIKVHMNLLLAVFLLDTSF). Topologically, residues 461–465 (LLSEP) are extracellular. Residues 466–495 (VALTGSEAGCRASAIFLHFSLLTCLSWMGL) traverse the membrane as a helical segment. Cysteines 475 and 562 form a disulfide. Topologically, residues 496-510 (EGYNLYRLVVEVFGT) are cytoplasmic. The chain crosses the membrane as a helical span at residues 511-533 (YVPGYLLKLSAMGWGFPIFLVTL). Topologically, residues 534 to 562 (VALVDVDNYGPIILAVHRTPEGVIYPSMC) are extracellular. A helical transmembrane segment spans residues 563–588 (WIRDSLVSYITNLGLFSLVFLFNMAM). The Cytoplasmic segment spans residues 589 to 602 (LATMVVQILRLRPH). Residues 603 to 624 (TQKWSHVLTLLGLSLVLGLPWA) form a helical membrane-spanning segment. Residues 625–628 (LIFF) lie on the Extracellular side of the membrane. A helical membrane pass occupies residues 629–654 (SFASGTFQLVVLYLFSIITSFQGFLI). Residues 655–693 (FIWYWSMRLQARGGPSPLKSNSDSARLPISSGSTSSSRI) are Cytoplasmic-facing. The disordered stretch occupies residues 670-693 (SPLKSNSDSARLPISSGSTSSSRI). The span at 684 to 693 (SSGSTSSSRI) shows a compositional bias: low complexity.

Belongs to the G-protein coupled receptor 2 family. LN-TM7 subfamily. In terms of assembly, heterodimer of 2 chains generated by proteolytic processing; the large extracellular N-terminal fragment (ADGRG1 NT) and the membrane-bound C-terminal fragment (ADGRG1-CT) predominantly remain associated and non-covalently linked. ADGRG1 NT self-associates in a trans-trans manner; the homophilic interaction enhances receptor signaling. Interacts with TGM2. Interacts with heparin; leading to the reduction of ADGRG1 shedding. Interacts with COL3A1. Part of a GPCR-tetraspanin complex at least consisting of ADGRG1, CD81, eventually CD9, and GNA11 in which CD81 is enhancing the association of ADGRG1 with GNA11. In terms of processing, autoproteolytically cleaved into 2 fragments; the large extracellular N-terminal fragment (ADGRG1 NT) and the membrane-bound C-terminal fragment (ADGRG1 CT) predominantly remain associated and non-covalently linked. Shedding to yield the secreted ADGRG1 N-terminal fragment seems to involve metalloprotease(s). Post-translationally, N-glycosylated. Contains sialic acid residues. Ubiquitinated. Undergoes polyubiquitination upon activation. In terms of tissue distribution, widely distributed with highest levels found in thyroid gland, brain and heart. Expressed in a great number of tumor cells. Expression is down-regulated in different tumors from highly metastatic cells.

It is found in the cell membrane. It localises to the secreted. Its subcellular location is the membrane raft. Forms a heterodimer of 2 chains generated by proteolytic processing that remain associated through non-covalent interactions mediated by the GAIN-B domain. In the inactivated receptor, the Stachel sequence (also named stalk) is embedded in the GAIN-B domain, where it adopts a beta-strand conformation. On activation, the Stachel moves into the 7 transmembrane region and adopts a twisted hook-shaped configuration that forms contacts within the receptor, leading to coupling of a G-alpha protein, which activates signaling. The cleaved GAIN-B and N-terminal domains can then dissociate from the rest of the receptor. Adhesion G-protein coupled receptor (aGPCR) for steroid hormone 17alpha-hydroxypregnenolone (17-OH), which is involved in cell adhesion and cell-cell interactions. Ligand binding causes a conformation change that triggers signaling via guanine nucleotide-binding proteins (G proteins) and modulates the activity of downstream effectors, such as RhoA pathway. ADGRG1 is coupled to G(12) and/or G(13) G proteins (GNA12 and GNA13, respectively) and mediates the activation Rho small GTPases. Acts as a potent suppressor of ferroptosis: binding to 17-OH-binding initiates signaling that down-regulates CD36 and alleviates ferroptosis-induced liver injury. Ligand-binding also induces cell adhesion activity via association with proteins such as collagen III/COL3A1 and TGM2. Mediates cell matrix adhesion in developing neurons and hematopoietic stem cells. Involved in cortical development, specifically in maintenance of the pial basement membrane integrity and in cortical lamination: association with COL3A1 in the developing brain inhibits neuronal migration via activation of the RhoA pathway. Together with TGM2, acts as a regulator of myelination and myelin repair in oligodendrocyte precursor cells. Acts as a hemostatic sensor of shear force: G protein-coupled receptor signaling is activated in response to shear force in platelets, promoting G(13) G protein signaling, and platelet shape change and aggregation in a COL3A1-dependent manner. Acts as an inhibitor of VEGFA production thereby inhibiting angiogenesis through a signaling pathway mediated by PRKCA. Plays a role in the maintenance of hematopoietic stem cells in bone marrow niche. Plays an essential role in testis development. The chain is Adhesion G-protein coupled receptor G1 from Homo sapiens (Human).